The following is a 405-amino-acid chain: Formate-dependent phosphoribosylglycinamide formyltransferase (405 aa).

N(1)-(5-phospho-beta-D-ribosyl)glycinamide-binding positions include 22-23 and Glu-82; that span reads EL. Residues Arg-115, Lys-162, 167-172, 202-205, and Glu-210 each bind ATP; these read SSGKGQ and EGFI. Residues 120 to 320 enclose the ATP-grasp domain; that stretch reads RLAAETLGLP…EFELHARAIL (201 aa). Mg(2+) is bound by residues Glu-279 and Glu-291. N(1)-(5-phospho-beta-D-ribosyl)glycinamide is bound by residues Asp-298, Lys-367, and 374-375; that span reads RR.

This sequence belongs to the PurK/PurT family. Homodimer.

It catalyses the reaction N(1)-(5-phospho-beta-D-ribosyl)glycinamide + formate + ATP = N(2)-formyl-N(1)-(5-phospho-beta-D-ribosyl)glycinamide + ADP + phosphate + H(+). Its pathway is purine metabolism; IMP biosynthesis via de novo pathway; N(2)-formyl-N(1)-(5-phospho-D-ribosyl)glycinamide from N(1)-(5-phospho-D-ribosyl)glycinamide (formate route): step 1/1. Functionally, involved in the de novo purine biosynthesis. Catalyzes the transfer of formate to 5-phospho-ribosyl-glycinamide (GAR), producing 5-phospho-ribosyl-N-formylglycinamide (FGAR). Formate is provided by PurU via hydrolysis of 10-formyl-tetrahydrofolate. The polypeptide is Formate-dependent phosphoribosylglycinamide formyltransferase (Leptothrix cholodnii (strain ATCC 51168 / LMG 8142 / SP-6) (Leptothrix discophora (strain SP-6))).